The chain runs to 278 residues: MENIIEVRNLKYKYDSESENYTLNDVSFQVKKGEWLSIVGHNGSGKSTTVRLIDGLLEAESGDIIISGDKLTAENVWEKRRQIGMVFQNPDNQFVGATVEDDVAFGLENQGLDYDLMVERVQQALELVGMQDFKEREPARLSGGQKQRVAVAGVVALRPDIIILDEATSMLDPEGRLDLIQTVKKIKDSNQLTVISITHDLDEIALSDRVLVMKEGQVESTATPRELFSREDLEELGLDQPFVNQVKVALRQSGLSLPDSYLTEKELQDQLWALLSKM.

The 236-residue stretch at 5–240 (IEVRNLKYKY…EDLEELGLDQ (236 aa)) folds into the ABC transporter domain. Residue 40 to 47 (GHNGSGKS) participates in ATP binding.

The protein belongs to the ABC transporter superfamily. Energy-coupling factor EcfA family. Forms a stable energy-coupling factor (ECF) transporter complex composed of 2 membrane-embedded substrate-binding proteins (S component), 2 ATP-binding proteins (A component) and 2 transmembrane proteins (T component).

It localises to the cell membrane. ATP-binding (A) component of a common energy-coupling factor (ECF) ABC-transporter complex. Unlike classic ABC transporters this ECF transporter provides the energy necessary to transport a number of different substrates. The chain is Energy-coupling factor transporter ATP-binding protein EcfA1 from Streptococcus sanguinis (strain SK36).